The primary structure comprises 358 residues: Trace amine-associated receptor 7e (358 aa).

Topologically, residues 1-47 (MATDDASFPWDQDSILSRDLLSALSSQLCYENLNRSCIRSPYSPGPR) are extracellular. Asn-34 carries an N-linked (GlcNAc...) asparagine glycan. 2 disulfides stabilise this stretch: Cys-37-Cys-201 and Cys-120-Cys-205. Residues 48–68 (LILHAVFGFSAVLAVCGNLLV) traverse the membrane as a helical segment. Over 69 to 83 (MTSILHFRQLHSPAN) the chain is Cytoplasmic. The helical transmembrane segment at 84 to 104 (FLVASLACADLLVGLTVMPFS) threads the bilayer. At 105-121 (MVRSVEGCWYFGDIYCK) the chain is on the extracellular side. A helical membrane pass occupies residues 122-143 (FHSSFDVSFCYSSIFHLCFISV). Over 144–166 (DRYIAVSDPLIYLTRFTASVSGK) the chain is Cytoplasmic. The helical transmembrane segment at 167–187 (CITFSWFLSIIYSFSLLYTGA) threads the bilayer. The Extracellular segment spans residues 188–212 (SEAGLEDLVSALTCVGGCQLAVNQS). Asn-210 carries an N-linked (GlcNAc...) asparagine glycan. Residues 213–233 (WVFINFLLFLVPTLVMMTVYS) form a helical membrane-spanning segment. At 234 to 274 (KVFLIAKQQAQNIEKIGKQTARASESYKDRVAKRERKAAKT) the chain is on the cytoplasmic side. The chain crosses the membrane as a helical span at residues 275–295 (LGITVAAFLLSWLPYFIDSII). Residues 296–309 (DAFLGFITPTYVYE) lie on the Extracellular side of the membrane. Residues 310–333 (ILVWIAYYNSAMNPLIYAFFYPWF) traverse the membrane as a helical segment. Over 334 to 358 (RKAIKLIVTGKILRENSSATNLFPE) the chain is Cytoplasmic.

It belongs to the G-protein coupled receptor 1 family.

The protein localises to the cell membrane. Functionally, olfactory receptor specific for N,N-dimethylalkylamines trace amines. Trace amine compounds are enriched in animal body fluids and act on trace amine-associated receptors (TAARs) to elicit both intraspecific and interspecific innate behaviors. Ligand-binding causes a conformation change that triggers signaling via G(s)-class of G alpha proteins (GNAL or GNAS). The chain is Trace amine-associated receptor 7e from Rattus norvegicus (Rat).